Reading from the N-terminus, the 337-residue chain is WRKY transcription factor 23 (337 aa).

The segment at I100 to A160 is disordered. Positions P106–A118 are enriched in low complexity. Basic residues predominate over residues H142–K155. A DNA-binding region (WRKY) is located at residues S168–P233.

Belongs to the WRKY group II-c family.

Its subcellular location is the nucleus. Functionally, transcription factor. Interacts specifically with the W box (5'-(T)TGAC[CT]-3'), a frequently occurring elicitor-responsive cis-acting element. The polypeptide is WRKY transcription factor 23 (WRKY23) (Arabidopsis thaliana (Mouse-ear cress)).